The primary structure comprises 257 residues: Diphthine synthase (257 aa).

Residues leucine 9, aspartate 85, valine 88, 113-114 (SI), leucine 164, alanine 209, and histidine 234 contribute to the S-adenosyl-L-methionine site.

The protein belongs to the diphthine synthase family. Homodimer.

The catalysed reaction is 2-[(3S)-amino-3-carboxypropyl]-L-histidyl-[translation elongation factor 2] + 3 S-adenosyl-L-methionine = diphthine-[translation elongation factor 2] + 3 S-adenosyl-L-homocysteine + 3 H(+). Its pathway is protein modification; peptidyl-diphthamide biosynthesis. S-adenosyl-L-methionine-dependent methyltransferase that catalyzes the trimethylation of the amino group of the modified target histidine residue in translation elongation factor 2 (EF-2), to form an intermediate called diphthine. The three successive methylation reactions represent the second step of diphthamide biosynthesis. The chain is Diphthine synthase from Methanocaldococcus jannaschii (strain ATCC 43067 / DSM 2661 / JAL-1 / JCM 10045 / NBRC 100440) (Methanococcus jannaschii).